The primary structure comprises 294 residues: 4-hydroxy-tetrahydrodipicolinate synthase (294 aa).

Thr47 contacts pyruvate. Residue Tyr135 is the Proton donor/acceptor of the active site. The active-site Schiff-base intermediate with substrate is Lys163. A pyruvate-binding site is contributed by Thr205.

This sequence belongs to the DapA family. In terms of assembly, homotetramer; dimer of dimers.

It localises to the cytoplasm. It catalyses the reaction L-aspartate 4-semialdehyde + pyruvate = (2S,4S)-4-hydroxy-2,3,4,5-tetrahydrodipicolinate + H2O + H(+). It functions in the pathway amino-acid biosynthesis; L-lysine biosynthesis via DAP pathway; (S)-tetrahydrodipicolinate from L-aspartate: step 3/4. Its function is as follows. Catalyzes the condensation of (S)-aspartate-beta-semialdehyde [(S)-ASA] and pyruvate to 4-hydroxy-tetrahydrodipicolinate (HTPA). In Rickettsia peacockii (strain Rustic), this protein is 4-hydroxy-tetrahydrodipicolinate synthase.